We begin with the raw amino-acid sequence, 208 residues long: CASP-like protein 1D1 (208 aa).

The tract at residues 1 to 36 (MSSVDTEKPAPPPLETEAPPPPPPPPPPPPPPPPPP) is disordered. Residues 1–41 (MSSVDTEKPAPPPLETEAPPPPPPPPPPPPPPPPPPAGYSA) lie on the Cytoplasmic side of the membrane. The segment covering 9 to 36 (PAPPPLETEAPPPPPPPPPPPPPPPPPP) has biased composition (pro residues). A helical membrane pass occupies residues 42 to 62 (LDVVLRILLLGSAVASVVVMV). At 63-89 (TSVQTKLIAVAGVPVLVSNKAKFQNSP) the chain is on the extracellular side. The chain crosses the membrane as a helical span at residues 90 to 110 (AFIYFVAALSVVGLYSIITTL). Over 111-133 (ASFIFISKPSCSTKTILHLAIWD) the chain is Cytoplasmic. The helical transmembrane segment at 134–154 (VLMLGLAASATGTAGGVAYVG) threads the bilayer. Over 155-180 (LKGNSHVGWNKVCNTYDKFCRHVGGS) the chain is Extracellular. The helical transmembrane segment at 181–201 (IAVALFASILLVLLVWLSLFT) threads the bilayer. At 202-208 (LYSRIRK) the chain is on the cytoplasmic side.

Belongs to the Casparian strip membrane proteins (CASP) family. Homodimer and heterodimers.

The protein localises to the cell membrane. In Vitis vinifera (Grape), this protein is CASP-like protein 1D1.